We begin with the raw amino-acid sequence, 266 residues long: Ribonuclease 3 (266 aa).

An RNase III domain is found at 8–130; the sequence is LARLTKKLGY…IIGAVYLDSN (123 aa). E43 provides a ligand contact to Mg(2+). Residue D47 is part of the active site. Mg(2+)-binding residues include D116 and E119. The active site involves E119. The DRBM domain occupies 157-227; the sequence is DPKTRLQEFL…AQQILALIEK (71 aa). The interval 229 to 266 is disordered; sequence REQEKEVKIKPTKQAKLANPRHTKSNPSSSSKKSSTRK. Over residues 253–266 the composition is skewed to low complexity; sequence SNPSSSSKKSSTRK.

The protein belongs to the ribonuclease III family. In terms of assembly, homodimer. It depends on Mg(2+) as a cofactor.

The protein localises to the cytoplasm. It catalyses the reaction Endonucleolytic cleavage to 5'-phosphomonoester.. Its function is as follows. Digests double-stranded RNA. Involved in the processing of primary rRNA transcript to yield the immediate precursors to the large and small rRNAs (23S and 16S). Processes some mRNAs, and tRNAs when they are encoded in the rRNA operon. Processes pre-crRNA and tracrRNA of type II CRISPR loci if present in the organism. This is Ribonuclease 3 from Colwellia psychrerythraea (strain 34H / ATCC BAA-681) (Vibrio psychroerythus).